The chain runs to 300 residues: MKTGNLFNTVALVGRSNTPGIAEPLATLAACIAKRGFEVVFEGDTAREIGISGYPALTPAEIGARADVAVVLGGDGTMLGIGRQLAPYRTPLIGINHGRLGFITDIAAADMQALVPVMLSGKFEREERSLLEARIVRDGEPIYHALAFNDVVVNRSGFSGMVELRASVDGRYMYNQRSDGLIVATPTGSTAYALSSAGPILHPQLQGIVLVPIAPHALSNRPIVLPDDSKIAIQIVGGRDVNVNFDMQSFTALELNDTIEVRRSKHTVPFLHPIGYSYYATLRKKLHWNEHASNEDDKAS.

The Proton acceptor role is filled by D75. Residues 75-76 (DG), 149-150 (ND), R177, D179, 190-195 (TAYALS), A214, and Q248 contribute to the NAD(+) site.

It belongs to the NAD kinase family. It depends on a divalent metal cation as a cofactor.

The protein localises to the cytoplasm. It carries out the reaction NAD(+) + ATP = ADP + NADP(+) + H(+). Involved in the regulation of the intracellular balance of NAD and NADP, and is a key enzyme in the biosynthesis of NADP. Catalyzes specifically the phosphorylation on 2'-hydroxyl of the adenosine moiety of NAD to yield NADP. This chain is NAD kinase, found in Burkholderia multivorans (strain ATCC 17616 / 249).